The following is a 220-amino-acid chain: Large ribosomal subunit protein uL3 (220 aa).

The tract at residues 61 to 81 (KGSKSNKYANKPAEGHAKKAD) is disordered.

The protein belongs to the universal ribosomal protein uL3 family. As to quaternary structure, part of the 50S ribosomal subunit. Forms a cluster with proteins L14 and L19.

Functionally, one of the primary rRNA binding proteins, it binds directly near the 3'-end of the 23S rRNA, where it nucleates assembly of the 50S subunit. This Staphylococcus epidermidis (strain ATCC 12228 / FDA PCI 1200) protein is Large ribosomal subunit protein uL3.